The following is a 90-amino-acid chain: UPF0237 protein PAE3582 (90 aa).

Residues 5–74 (VVSVLGADRV…LEEEGKRLGV (70 aa)) enclose the ACT domain.

This sequence belongs to the UPF0237 family.

The sequence is that of UPF0237 protein PAE3582 from Pyrobaculum aerophilum (strain ATCC 51768 / DSM 7523 / JCM 9630 / CIP 104966 / NBRC 100827 / IM2).